A 509-amino-acid chain; its full sequence is MVDGVMILPVLMMMAFPSPSVEDEKPKVNQKLYMCVCEGLSCGNEDHCEGQQCFSSLSINDGFHVYQKGCFQVYEQGKMTCKTPPSPGQAVECCQGDWCNRNITAQLPTKGKSFPGTQNFHLEVGLIILSVVFAVCLLACILGVALRKFKRRNQERLNPRDVEYGTIEGLITTNVGDSTLAELLDHSCTSGSGSGLPFLVQRTVARQITLLECVGKGRYGEVWRGSWQGENVAVKIFSSRDEKSWFRETELYNTVMLRHENILGFIASDMTSRHSSTQLWLITHYHEMGSLYDYLQLTTLDTVSCLRIVLSIASGLAHLHIEIFGTQGKSAIAHRDLKSKNILVKKNGQCCIADLGLAVMHSQSTNQLDVGNNPRVGTKRYMAPEVLDETIQVDCFDSYKRVDIWAFGLVLWEVARRMVSNGIVEDYKPPFYDVVPNDPSFEDMRKVVCVDQQRPNIPNRWFSDPTLTSLAKLMKECWYQNPSARLTALRIKKTLTKIDNSLDKLKTDC.

Residues 1–20 (MVDGVMILPVLMMMAFPSPS) form the signal peptide. The Extracellular segment spans residues 21 to 123 (VEDEKPKVNQ…FPGTQNFHLE (103 aa)). Asn-102 is a glycosylation site (N-linked (GlcNAc...) asparagine). Residues 124–146 (VGLIILSVVFAVCLLACILGVAL) form a helical membrane-spanning segment. At 147 to 509 (RKFKRRNQER…NSLDKLKTDC (363 aa)) the chain is on the cytoplasmic side. The GS domain maps to 178-207 (STLAELLDHSCTSGSGSGLPFLVQRTVARQ). Positions 208-502 (ITLLECVGKG…KTLTKIDNSL (295 aa)) constitute a Protein kinase domain. ATP-binding positions include 214 to 222 (VGKGRYGEV) and Lys-235. The active-site Proton acceptor is Asp-336. Ser-501 carries the post-translational modification Phosphoserine.

The protein belongs to the protein kinase superfamily. TKL Ser/Thr protein kinase family. TGFB receptor subfamily. In terms of assembly, interacts with FKBP1A. Interacts with FCHO1. Interacts with CLU. Interacts with type II receptors AMHR2 and ACVR2A. Interacts with BMP7. Interacts with BMP9. Interacts with BMP6 (when glycosylated); the interaction may induce HAMP expression. Interacts with TSC22D1/TSC-22. Mg(2+) is required as a cofactor. The cofactor is Mn(2+). In terms of tissue distribution, highly expressed in bone during developmental stages. Expressed in normal parenchymal cells, endothelial cells, fibroblasts and tumor-derived epithelial cells.

The protein localises to the membrane. The catalysed reaction is L-threonyl-[receptor-protein] + ATP = O-phospho-L-threonyl-[receptor-protein] + ADP + H(+). It carries out the reaction L-seryl-[receptor-protein] + ATP = O-phospho-L-seryl-[receptor-protein] + ADP + H(+). Functionally, bone morphogenetic protein (BMP) type I receptor that is involved in a wide variety of biological processes, including bone, heart, cartilage, nervous, and reproductive system development and regulation. As a type I receptor, forms heterotetrameric receptor complexes with the type II receptors AMHR2, ACVR2A ors ACVR2B. Upon binding of ligands such as BMP7 or BMP9 to the heteromeric complexes, type II receptors transphosphorylate ACVR1 intracellular domain. In turn, ACVR1 kinase domain is activated and subsequently phosphorylates SMAD1/5/8 proteins that transduce the signal. In addition to its role in mediating BMP pathway-specific signaling, suppresses TGFbeta/activin pathway signaling by interfering with the binding of activin to its type II receptor. Besides canonical SMAD signaling, can activate non-canonical pathways such as p38 mitogen-activated protein kinases/MAPKs. May promote the expression of HAMP, potentially via its interaction with BMP6. The sequence is that of Activin receptor type-1 (Acvr1) from Mus musculus (Mouse).